The following is a 77-amino-acid chain: Large ribosomal subunit protein bL28 (77 aa).

Residues 1–21 (MARVCKVTGKRPMTGNNVSHA) form a disordered region.

The protein belongs to the bacterial ribosomal protein bL28 family.

This is Large ribosomal subunit protein bL28 from Chromobacterium violaceum (strain ATCC 12472 / DSM 30191 / JCM 1249 / CCUG 213 / NBRC 12614 / NCIMB 9131 / NCTC 9757 / MK).